We begin with the raw amino-acid sequence, 437 residues long: Amino-acid acetyltransferase (437 aa).

Positions 289-437 constitute an N-acetyltransferase domain; sequence ECIRLATSFD…SKVLMLALDN (149 aa).

This sequence belongs to the acetyltransferase family. ArgA subfamily.

The protein resides in the cytoplasm. The enzyme catalyses L-glutamate + acetyl-CoA = N-acetyl-L-glutamate + CoA + H(+). It participates in amino-acid biosynthesis; L-arginine biosynthesis; N(2)-acetyl-L-ornithine from L-glutamate: step 1/4. This is Amino-acid acetyltransferase from Haemophilus ducreyi (strain 35000HP / ATCC 700724).